The primary structure comprises 263 residues: Palmitoyltransferase ZDHHC22 (263 aa).

The Cytoplasmic portion of the chain corresponds to 1–9; that stretch reads MLALRLLNV. The chain crosses the membrane as a helical span at residues 10–30; the sequence is VAPAYFLCISLVTFVLQLFLF. The Lumenal portion of the chain corresponds to 31–48; that stretch reads LPSMREDPTATPLFSPAV. A helical transmembrane segment spans residues 49–69; that stretch reads LHGALFLFLSANALGNYVLVI. At 70–125 the chain is on the cytoplasmic side; the sequence is QNSPDDLGTCQGTMSQRPQCPPPSTHFCRVCSRVTLRHDHHCFFTGNCIGSRNMRN. Residues 91–131 enclose the DHHC domain; sequence PPSTHFCRVCSRVTLRHDHHCFFTGNCIGSRNMRNFILFCL. C111 acts as the S-palmitoyl cysteine intermediate in catalysis. A run of 2 helical transmembrane segments spans residues 126–146 and 147–167; these read FILF…AGVA and YISA…TLLP. At 168 to 182 the chain is on the cytoplasmic side; the sequence is TSISQFFSGAVLGSD. Residues 183–203 form a helical membrane-spanning segment; it reads MFVILMLYLWFAVGLACAGFC. The Lumenal segment spans residues 204 to 263; the sequence is CHQLLLILRGQTRYQVRKGMAVRARPWRKNLQEVFGKRWLLGLLVPMFNVGTESSKQQDK.

Belongs to the DHHC palmitoyltransferase family. Interacts with CNN3.

It is found in the endoplasmic reticulum membrane. The protein localises to the golgi apparatus membrane. It catalyses the reaction L-cysteinyl-[protein] + hexadecanoyl-CoA = S-hexadecanoyl-L-cysteinyl-[protein] + CoA. Palmitoyltransferase that could catalyze the addition of palmitate onto various protein substrates and be involved in a variety of cellular processes. Catalyzes the palmitoylation of KCNMA1, regulating localization of KCNMA1 to the plasma membrane. Might also mediate palmitoylation of CNN3. The sequence is that of Palmitoyltransferase ZDHHC22 from Mus musculus (Mouse).